The chain runs to 212 residues: Fe/S biogenesis protein NfuA (212 aa).

[4Fe-4S] cluster-binding residues include C169 and C172.

Belongs to the NfuA family. Homodimer. [4Fe-4S] cluster serves as cofactor.

Functionally, involved in iron-sulfur cluster biogenesis. Binds a 4Fe-4S cluster, can transfer this cluster to apoproteins, and thereby intervenes in the maturation of Fe/S proteins. Could also act as a scaffold/chaperone for damaged Fe/S proteins. The polypeptide is Fe/S biogenesis protein NfuA (Acinetobacter baylyi (strain ATCC 33305 / BD413 / ADP1)).